Consider the following 391-residue polypeptide: Phosphoglycerate kinase (391 aa).

Substrate contacts are provided by residues 21–23, Arg-36, 59–62, Arg-113, and Arg-146; these read DFN and HLGR. ATP is bound by residues Lys-197, Glu-319, and 345-348; that span reads GGDT.

Belongs to the phosphoglycerate kinase family. Monomer.

It is found in the cytoplasm. It catalyses the reaction (2R)-3-phosphoglycerate + ATP = (2R)-3-phospho-glyceroyl phosphate + ADP. It functions in the pathway carbohydrate degradation; glycolysis; pyruvate from D-glyceraldehyde 3-phosphate: step 2/5. The chain is Phosphoglycerate kinase from Methylococcus capsulatus (strain ATCC 33009 / NCIMB 11132 / Bath).